Reading from the N-terminus, the 608-residue chain is Replication protein E1 (608 aa).

Positions Lys-83–Lys-85 match the Nuclear localization signal motif. Phosphoserine; by host occurs at positions 88 and 96. The segment at Gln-148–Ser-311 is DNA-binding region. The SF3 helicase domain occupies Leu-410–Leu-560. Gly-436–Ser-443 lines the ATP pocket. Lys-517 participates in a covalent cross-link: Glycyl lysine isopeptide (Lys-Gly) (interchain with G-Cter in SUMO).

The protein belongs to the papillomaviridae E1 protein family. In terms of assembly, can form hexamers. Interacts with E2 protein; this interaction increases E1 DNA binding specificity. Interacts with host DNA polymerase subunit POLA2. Interacts with host single stranded DNA-binding protein RPA1. Interacts with host TOP1; this interaction stimulates the enzymatic activity of TOP1. Post-translationally, phosphorylated. In terms of processing, sumoylated.

It is found in the host nucleus. It carries out the reaction Couples ATP hydrolysis with the unwinding of duplex DNA by translocating in the 3'-5' direction.. It catalyses the reaction ATP + H2O = ADP + phosphate + H(+). In terms of biological role, ATP-dependent DNA 3'-5' helicase required for initiation of viral DNA replication. It forms a complex with the viral E2 protein. The E1-E2 complex binds to the replication origin which contains binding sites for both proteins. During the initial step, a dimer of E1 interacts with a dimer of protein E2 leading to a complex that binds the viral origin of replication with high specificity. Then, a second dimer of E1 displaces the E2 dimer in an ATP-dependent manner to form the E1 tetramer. Following this, two E1 monomers are added to each half of the site, which results in the formation of two E1 trimers on the viral ori. Subsequently, two hexamers will be created. The double hexamer acts as a bi-directional helicase machinery and unwinds the viral DNA and then recruits the host DNA polymerase to start replication. The polypeptide is Replication protein E1 (Homo sapiens (Human)).